Consider the following 2606-residue polypeptide: Large tegument protein deneddylase (2606 aa).

The interval 1–235 is deubiquitination activity; sequence MAFQAQTDTG…LKRSGAYVNL (235 aa). The 212-residue stretch at 14-225 folds into the Peptidase C76 domain; it reads LATASSHQGD…LLANYGIASA (212 aa). Active-site residues include Cys34, Asp163, and His165. Disordered regions lie at residues 318 to 349, 390 to 411, 1020 to 1135, 2253 to 2316, and 2434 to 2458; these read IAISPLHSNTESDDSETGKKNTPVKITKPNEA, DTDSLLSTHESPPATPSLKSGQ, KKGL…ESSE, PEIH…PTPL, and PPHDFVEPVENGDPPGPPGSEERKY. Polar residues predominate over residues 1038–1050; the sequence is TPVTDSKLIQDSQ. Basic and acidic residues predominate over residues 1051-1061; that stretch reads QNDRHQKEKPL. Residues 1085–1097 show a composition bias toward polar residues; that stretch reads KPQNLSLPVSTNK. The segment covering 1105–1132 has biased composition (low complexity); that stretch reads ESSPIESTSPSHSPVSSMESQNGSFSLE. Positions 2304–2316 are enriched in pro residues; the sequence is PNPPRPTTFPTPL.

This sequence belongs to the herpesviridae large tegument protein family. In terms of assembly, interacts with host CUL1 and CUL4A; these interactions inhibit the E3 ligase activity of cullins. Interacts with inner tegument protein. Interacts with capsid vertex specific component CVC2. Interacts with the major capsid protein/MCP.

The protein localises to the virion tegument. It localises to the host cytoplasm. The protein resides in the host nucleus. It carries out the reaction Thiol-dependent hydrolysis of ester, thioester, amide, peptide and isopeptide bonds formed by the C-terminal Gly of ubiquitin (a 76-residue protein attached to proteins as an intracellular targeting signal).. Its function is as follows. Large tegument protein that plays multiple roles in the viral cycle. During viral entry, remains associated with the capsid while most of the tegument is detached and participates in the capsid transport toward the host nucleus. Plays a role in the routing of the capsid at the nuclear pore complex and subsequent uncoating. Within the host nucleus, acts as a deneddylase and promotes the degradation of nuclear CRLs (cullin-RING ubiquitin ligases) and thereby stabilizes nuclear CRL substrates, while cytoplasmic CRLs remain unaffected. These modifications prevent host cell cycle S-phase progression and create a favorable environment allowing efficient viral genome replication. Participates later in the secondary envelopment of capsids. Indeed, plays a linker role for the association of the outer viral tegument to the capsids together with the inner tegument protein. This Connochaetes taurinus (Blue wildebeest) protein is Large tegument protein deneddylase (64).